The following is a 203-amino-acid chain: Large ribosomal subunit protein bL25 (203 aa).

The protein belongs to the bacterial ribosomal protein bL25 family. CTC subfamily. In terms of assembly, part of the 50S ribosomal subunit; part of the 5S rRNA/L5/L18/L25 subcomplex. Contacts the 5S rRNA. Binds to the 5S rRNA independently of L5 and L18.

Functionally, this is one of the proteins that binds to the 5S RNA in the ribosome where it forms part of the central protuberance. The sequence is that of Large ribosomal subunit protein bL25 from Rickettsia conorii (strain ATCC VR-613 / Malish 7).